Reading from the N-terminus, the 617-residue chain is Protein fem-1 homolog C (617 aa).

ANK repeat units lie at residues 2-31 (DLKTAVFNAARDGKLRLLSKLLENKAKDDV), 40-70 (NGATPLLMAARYGHLDMVDYLLDQCSASVEI), 82-111 (EGAPPLWAASAAGHLKVVRSLLVHGASVNN), 115-144 (TNSTPLRAACFDGHLEIVKYLVEHKADLEV), 148-177 (HGHTCLMISCYKGHKEIAQFLLEKGADVNR), 181-210 (KGNTALHDCAESGSLEIMQMLLKYGARMEK), and 213-242 (YGMTPLLSASVTGHTNIVDFLTQNPQTSKN). TPR repeat units lie at residues 245-279 (INALELLGATFVDKKRDLLGALKYWKRAMDMRHSD) and 338-371 (SYYIRYRGAVYADSGNFKRCINLWKYALDMQQNN). ANK repeat units lie at residues 481–523 (NNFS…DVNV) and 527–556 (EQNSPLHVAALNNHPDIMNLLVKSGAHFDS).

The protein belongs to the fem-1 family. In terms of assembly, component of a CRL2 E3 ubiquitin-protein ligase complex, also named ECS (Elongin BC-CUL2/5-SOCS-box protein) complex.

It functions in the pathway protein modification; protein ubiquitination. Its function is as follows. Substrate-recognition component of a Cul2-RING (CRL2) E3 ubiquitin-protein ligase complex of the DesCEND (destruction via C-end degrons) pathway, which recognizes a C-degron located at the extreme C terminus of target proteins, leading to their ubiquitination and degradation. The C-degron recognized by the DesCEND pathway is usually a motif of less than ten residues and can be present in full-length proteins, truncated proteins or proteolytically cleaved forms. The CRL2(FEM1C) complex specifically recognizes proteins with an arginine at the C-terminus: recognizes and binds proteins ending with -Lys/Arg-Xaa-Arg and -Lys/Arg-Xaa-Xaa-Arg C-degrons, leading to their ubiquitination and degradation. This Xenopus laevis (African clawed frog) protein is Protein fem-1 homolog C.